The chain runs to 509 residues: Maturase K (509 aa).

This sequence belongs to the intron maturase 2 family. MatK subfamily.

The protein resides in the plastid. The protein localises to the chloroplast. In terms of biological role, usually encoded in the trnK tRNA gene intron. Probably assists in splicing its own and other chloroplast group II introns. The protein is Maturase K of Nicotiana clevelandii (Wild tobacco).